We begin with the raw amino-acid sequence, 93 residues long: Small ribosomal subunit protein bS6 (93 aa).

This sequence belongs to the bacterial ribosomal protein bS6 family.

Binds together with bS18 to 16S ribosomal RNA. In Treponema denticola (strain ATCC 35405 / DSM 14222 / CIP 103919 / JCM 8153 / KCTC 15104), this protein is Small ribosomal subunit protein bS6.